We begin with the raw amino-acid sequence, 550 residues long: Glucose-6-phosphate isomerase 1 (550 aa).

Glutamate 353 serves as the catalytic Proton donor. Active-site residues include histidine 384 and lysine 512.

The protein belongs to the GPI family.

It localises to the cytoplasm. It carries out the reaction alpha-D-glucose 6-phosphate = beta-D-fructose 6-phosphate. Its pathway is carbohydrate biosynthesis; gluconeogenesis. The protein operates within carbohydrate degradation; glycolysis; D-glyceraldehyde 3-phosphate and glycerone phosphate from D-glucose: step 2/4. Catalyzes the reversible isomerization of glucose-6-phosphate to fructose-6-phosphate. This chain is Glucose-6-phosphate isomerase 1, found in Thiobacillus denitrificans (strain ATCC 25259 / T1).